A 37-amino-acid polypeptide reads, in one-letter code: Cytochrome b6-f complex subunit 5 (37 aa).

Residues 5–25 form a helical membrane-spanning segment; the sequence is FLFGIVLGLIPVTLAGLFVTA.

It belongs to the PetG family. As to quaternary structure, the 4 large subunits of the cytochrome b6-f complex are cytochrome b6, subunit IV (17 kDa polypeptide, PetD), cytochrome f and the Rieske protein, while the 4 small subunits are PetG, PetL, PetM and PetN. The complex functions as a dimer.

The protein resides in the plastid. It localises to the chloroplast thylakoid membrane. In terms of biological role, component of the cytochrome b6-f complex, which mediates electron transfer between photosystem II (PSII) and photosystem I (PSI), cyclic electron flow around PSI, and state transitions. PetG is required for either the stability or assembly of the cytochrome b6-f complex. This Daucus carota (Wild carrot) protein is Cytochrome b6-f complex subunit 5.